Reading from the N-terminus, the 289-residue chain is Cbb3-type cytochrome c oxidase subunit FixP (289 aa).

At 1–33 the chain is on the cytoplasmic side; that stretch reads MADKHKHVDEVSGVETTGHEWDGIRELNNPMPR. The helical transmembrane segment at 34-56 threads the bilayer; that stretch reads WWVYSFYATIIWAIGYAIAYPSW. Topologically, residues 57-289 are periplasmic; the sequence is PMLTEATKGM…VFVHSLGGGE (233 aa). 2 consecutive Cytochrome c domains span residues 110-198 and 205-286; these read FAVS…VSLT and HLVQ…HSLG. The heme c site is built by Cys123, Cys126, His127, Met175, Cys218, Cys221, His222, and Met263.

It belongs to the CcoP / FixP family. Component of the cbb3-type cytochrome c oxidase at least composed of FixN, FixO, FixQ and FixP. The cofactor is heme c.

The protein resides in the cell inner membrane. The protein operates within energy metabolism; oxidative phosphorylation. Functionally, C-type cytochrome. Part of the cbb3-type cytochrome c oxidase complex. FixP subunit is required for transferring electrons from donor cytochrome c via its heme groups to FixO subunit. From there, electrons are shuttled to the catalytic binuclear center of FixN subunit where oxygen reduction takes place. The complex also functions as a proton pump. The protein is Cbb3-type cytochrome c oxidase subunit FixP of Rhizobium meliloti (strain 1021) (Ensifer meliloti).